The primary structure comprises 235 residues: Phosphoribosylaminoimidazole-succinocarboxamide synthase (235 aa).

It belongs to the SAICAR synthetase family.

It catalyses the reaction 5-amino-1-(5-phospho-D-ribosyl)imidazole-4-carboxylate + L-aspartate + ATP = (2S)-2-[5-amino-1-(5-phospho-beta-D-ribosyl)imidazole-4-carboxamido]succinate + ADP + phosphate + 2 H(+). Its pathway is purine metabolism; IMP biosynthesis via de novo pathway; 5-amino-1-(5-phospho-D-ribosyl)imidazole-4-carboxamide from 5-amino-1-(5-phospho-D-ribosyl)imidazole-4-carboxylate: step 1/2. This Clostridium novyi (strain NT) protein is Phosphoribosylaminoimidazole-succinocarboxamide synthase.